A 117-amino-acid polypeptide reads, in one-letter code: MRWALAVLLAFLSPASQISSNLEGRTKSVTRLTGSSAEITCDLPGASTLYIHWYLHQEGKAPQCLLYYEPYYSRVVLESGITPGKYDTGSTRSNWNLRLQNLIKNDSGFYYCATWDR.

Residues 1 to 20 (MRWALAVLLAFLSPASQISS) form the signal peptide. One can recognise an Ig-like domain in the interval 21–117 (NLEGRTKSVT…GFYYCATWDR (97 aa)). C41 and C112 are disulfide-bonded. A glycan (N-linked (GlcNAc...) asparagine) is linked at N105.

In terms of assembly, gamma-delta TR is a heterodimer composed of a gamma and delta chain; disulfide-linked. The gamma-delta TR is associated with the transmembrane signaling CD3 coreceptor proteins following the stoichiometry: a single gamma-delta TR heterodimer associates with one CD3D-CD3E heterodimer, one CD3G-CD3E heterodimer and one CD247 homodimer forming a stable octameric structure. Upon activation, gamma-delta TR complex associates with FCER1G to initiate intracellular signaling.

It localises to the cell membrane. Functionally, probable non-functional open reading frame (ORF) of V region of the variable domain of T cell receptor (TR) gamma chain. Non-functional ORF generally cannot participate in the synthesis of a productive T cell receptor (TR) chain due to altered V-(D)-J or switch recombination and/or splicing site (at mRNA level) and/or conserved amino acid change (protein level). Gamma-delta TRs recognize a variety of self and foreign non-peptide antigens frequently expressed at the epithelial boundaries between the host and external environment, including endogenous lipids presented by MH-like protein CD1D and phosphoantigens presented by butyrophilin-like molecule BTN3A1. Upon antigen recognition induces rapid, innate-like immune responses involved in pathogen clearance and tissue repair. Binding of gamma-delta TR complex to antigen triggers phosphorylation of immunoreceptor tyrosine-based activation motifs (ITAMs) in the CD3 chains by the LCK and FYN kinases, allowing the recruitment, phosphorylation, and activation of ZAP70 that facilitates phosphorylation of the scaffolding proteins LCP2 and LAT. This lead to the formation of a supramolecular signalosome that recruits the phospholipase PLCG1, resulting in calcium mobilization and ERK activation, ultimately leading to T cell expansion and differentiation into effector cells. Gamma-delta TRs are produced through somatic rearrangement of a limited repertoire of variable (V), diversity (D), and joining (J) genes. The potential diversity of gamma-delta TRs is conferred by the unique ability to rearrange (D) genes in tandem and to utilize all three reading frames. The combinatorial diversity is considerably increased by the sequence exonuclease trimming and random nucleotide (N) region additions which occur during the V-(D)-J rearrangements. In Homo sapiens (Human), this protein is Probable non-functional T cell receptor gamma variable.